Reading from the N-terminus, the 96-residue chain is Aspartyl/glutamyl-tRNA(Asn/Gln) amidotransferase subunit C (96 aa).

The protein belongs to the GatC family. As to quaternary structure, heterotrimer of A, B and C subunits.

The catalysed reaction is L-glutamyl-tRNA(Gln) + L-glutamine + ATP + H2O = L-glutaminyl-tRNA(Gln) + L-glutamate + ADP + phosphate + H(+). It carries out the reaction L-aspartyl-tRNA(Asn) + L-glutamine + ATP + H2O = L-asparaginyl-tRNA(Asn) + L-glutamate + ADP + phosphate + 2 H(+). In terms of biological role, allows the formation of correctly charged Asn-tRNA(Asn) or Gln-tRNA(Gln) through the transamidation of misacylated Asp-tRNA(Asn) or Glu-tRNA(Gln) in organisms which lack either or both of asparaginyl-tRNA or glutaminyl-tRNA synthetases. The reaction takes place in the presence of glutamine and ATP through an activated phospho-Asp-tRNA(Asn) or phospho-Glu-tRNA(Gln). The chain is Aspartyl/glutamyl-tRNA(Asn/Gln) amidotransferase subunit C from Exiguobacterium sp. (strain ATCC BAA-1283 / AT1b).